The chain runs to 317 residues: UV DNA damage endonuclease (317 aa).

The protein belongs to the uve1/UvsE family.

Its function is as follows. Component in a DNA repair pathway. Removal of UV LIGHT damaged nucleotides. Recognizes pyrimidine dimers and cleave a phosphodiester bond immediately 5' to the lesion. In Bacillus cereus (strain B4264), this protein is UV DNA damage endonuclease.